Reading from the N-terminus, the 313-residue chain is Ribosomal RNA small subunit methyltransferase H (313 aa).

Residues Gly-36 to His-38, Asp-56, Phe-80, Asp-102, and Gln-109 contribute to the S-adenosyl-L-methionine site.

The protein belongs to the methyltransferase superfamily. RsmH family.

It is found in the cytoplasm. The enzyme catalyses cytidine(1402) in 16S rRNA + S-adenosyl-L-methionine = N(4)-methylcytidine(1402) in 16S rRNA + S-adenosyl-L-homocysteine + H(+). In terms of biological role, specifically methylates the N4 position of cytidine in position 1402 (C1402) of 16S rRNA. The sequence is that of Ribosomal RNA small subunit methyltransferase H from Haemophilus ducreyi (strain 35000HP / ATCC 700724).